We begin with the raw amino-acid sequence, 1054 residues long: Calcium-transporting ATPase 2, endoplasmic reticulum-type (1054 aa).

Residues M1 to P53 lie on the Cytoplasmic side of the membrane. The helical transmembrane segment at L54–A74 threads the bilayer. The Lumenal segment spans residues F75–E98. A helical membrane pass occupies residues P99–S118. The Cytoplasmic portion of the chain corresponds to N119–L262. Residues D263–M282 traverse the membrane as a helical segment. The Lumenal segment spans residues I283–Y312. The chain crosses the membrane as a helical span at residues F313 to A330. 4 residues coordinate Ca(2+): V321, A322, I324, and E326. Residues V331–M782 are Cytoplasmic-facing. The active-site 4-aspartylphosphate intermediate is the D368. Residues D727 and D731 each coordinate Mg(2+). Residues K783 to L802 form a helical membrane-spanning segment. Positions 793 and 796 each coordinate Ca(2+). Topologically, residues T803–M812 are lumenal. A helical membrane pass occupies residues I813–G833. Ca(2+)-binding residues include N821, T824, and D825. The Cytoplasmic segment spans residues F834–L853. A helical transmembrane segment spans residues I854–I876. Over F877 to M949 the chain is Lumenal. The chain crosses the membrane as a helical span at residues T950–S969. E960 is a binding site for Ca(2+). The Cytoplasmic portion of the chain corresponds to E970–N982. A helical membrane pass occupies residues P983–Y1001. At V1002 to F1016 the chain is on the lumenal side. Residues R1017 to K1037 traverse the membrane as a helical segment. The Cytoplasmic portion of the chain corresponds to F1038 to M1054.

This sequence belongs to the cation transport ATPase (P-type) (TC 3.A.3) family. Type IIA subfamily.

Its subcellular location is the membrane. It catalyses the reaction Ca(2+)(in) + ATP + H2O = Ca(2+)(out) + ADP + phosphate + H(+). In terms of biological role, this magnesium-dependent enzyme catalyzes the hydrolysis of ATP coupled with the translocation of calcium from the cytosol to an endomembrane compartment. This chain is Calcium-transporting ATPase 2, endoplasmic reticulum-type (ECA2), found in Arabidopsis thaliana (Mouse-ear cress).